Reading from the N-terminus, the 149-residue chain is Interleukin-2 (149 aa).

The N-terminal stretch at 1–20 (MYRMQLLSCIALTLAVLANS) is a signal peptide. O-linked (GalNAc...) threonine glycosylation occurs at T23. C78 and C121 are oxidised to a cystine. The N-linked (GlcNAc...) asparagine glycan is linked to N106.

Belongs to the IL-2 family.

It is found in the secreted. Functionally, cytokine produced by activated CD4-positive helper T-cells and to a lesser extend activated CD8-positive T-cells and natural killer (NK) cells that plays pivotal roles in the immune response and tolerance. Binds to a receptor complex composed of either the high-affinity trimeric IL-2R (IL2RA/CD25, IL2RB/CD122 and IL2RG/CD132) or the low-affinity dimeric IL-2R (IL2RB and IL2RG). Interaction with the receptor leads to oligomerization and conformation changes in the IL-2R subunits resulting in downstream signaling starting with phosphorylation of JAK1 and JAK3. In turn, JAK1 and JAK3 phosphorylate the receptor to form a docking site leading to the phosphorylation of several substrates including STAT5. This process leads to activation of several pathways including STAT, phosphoinositide-3-kinase/PI3K and mitogen-activated protein kinase/MAPK pathways. Functions as a T-cell growth factor and can increase NK-cell cytolytic activity as well. Promotes strong proliferation of activated B-cells and subsequently immunoglobulin production. Plays a pivotal role in regulating the adaptive immune system by controlling the survival and proliferation of regulatory T-cells, which are required for the maintenance of immune tolerance. Moreover, participates in the differentiation and homeostasis of effector T-cell subsets, including Th1, Th2, Th17 as well as memory CD8-positive T-cells. The sequence is that of Interleukin-2 (IL2) from Equus caballus (Horse).